Reading from the N-terminus, the 123-residue chain is MPTIQQLIRSKRQLVKSRTKSPALQGCPQRRGVCTRVYTTTPKKPNSALRKVARVKLTSGFEITAYIPGIGHNLQEHSVVLVRGGRVKDLPGVRYHIVRGTLDTVGVKDRKQGRSKYGVKKPK.

The protein belongs to the universal ribosomal protein uS12 family. Part of the 30S ribosomal subunit.

The protein localises to the plastid. Its subcellular location is the chloroplast. With S4 and S5 plays an important role in translational accuracy. Located at the interface of the 30S and 50S subunits. This is Small ribosomal subunit protein uS12c (rps12) from Anthoceros angustus (Hornwort).